The chain runs to 161 residues: Nucleotide-binding protein NE2248 (161 aa).

Belongs to the YajQ family.

Its function is as follows. Nucleotide-binding protein. The sequence is that of Nucleotide-binding protein NE2248 from Nitrosomonas europaea (strain ATCC 19718 / CIP 103999 / KCTC 2705 / NBRC 14298).